A 187-amino-acid chain; its full sequence is MPKINGNEIRPGNVLEHNDGLWAAVKVDHVKPGKGGAFAQVEMRNLRNGSKLNERFRSADKVERVRLEQKDQQFLYEDAGMLVVMDTETYEQVQLPAELLGERRPFLQDGMTIVVEFYEEEALNATLPQKVVCKIVETEAVVKGQTAAKSFKPALLENGVKVMVPPFVGQDENIVVNTETMEYSERA.

The protein belongs to the elongation factor P family.

The protein resides in the cytoplasm. It participates in protein biosynthesis; polypeptide chain elongation. Functionally, involved in peptide bond synthesis. Stimulates efficient translation and peptide-bond synthesis on native or reconstituted 70S ribosomes in vitro. Probably functions indirectly by altering the affinity of the ribosome for aminoacyl-tRNA, thus increasing their reactivity as acceptors for peptidyl transferase. This is Elongation factor P from Roseobacter denitrificans (strain ATCC 33942 / OCh 114) (Erythrobacter sp. (strain OCh 114)).